We begin with the raw amino-acid sequence, 403 residues long: 4-hydroxy-3-methylbut-2-en-1-yl diphosphate synthase (flavodoxin) (403 aa).

Over residues 1 to 16 the composition is skewed to basic and acidic residues; the sequence is MNTENPIEKPFRKTGD. A disordered region spans residues 1-31; that stretch reads MNTENPIEKPFRKTGDPVDLTSESPLHPRRK. Cysteine 291, cysteine 294, cysteine 326, and glutamate 333 together coordinate [4Fe-4S] cluster.

Belongs to the IspG family. It depends on [4Fe-4S] cluster as a cofactor.

It carries out the reaction (2E)-4-hydroxy-3-methylbut-2-enyl diphosphate + oxidized [flavodoxin] + H2O + 2 H(+) = 2-C-methyl-D-erythritol 2,4-cyclic diphosphate + reduced [flavodoxin]. Its pathway is isoprenoid biosynthesis; isopentenyl diphosphate biosynthesis via DXP pathway; isopentenyl diphosphate from 1-deoxy-D-xylulose 5-phosphate: step 5/6. Converts 2C-methyl-D-erythritol 2,4-cyclodiphosphate (ME-2,4cPP) into 1-hydroxy-2-methyl-2-(E)-butenyl 4-diphosphate. In Bifidobacterium longum (strain NCC 2705), this protein is 4-hydroxy-3-methylbut-2-en-1-yl diphosphate synthase (flavodoxin).